Here is a 176-residue protein sequence, read N- to C-terminus: MARIGKKPIQVPDKVKVSYTDRCITVSSDKGVLSRTVQGDVDLEIKEDHIHVVAGSENRKVLALQGLYRSLVNNMVQGVSTGFSRSLEINGIGYRVELNGQTVVLNIGYSHPINFELPDGVTAKVEKNVLTLASIDKELLGQTAASIRKLRPPEPYKGRGIKYTDEHIQRKAGKTK.

Basic and acidic residues predominate over residues 151–169 (RPPEPYKGRGIKYTDEHIQ). The segment at 151–176 (RPPEPYKGRGIKYTDEHIQRKAGKTK) is disordered.

Belongs to the universal ribosomal protein uL6 family. Part of the 50S ribosomal subunit.

In terms of biological role, this protein binds to the 23S rRNA, and is important in its secondary structure. It is located near the subunit interface in the base of the L7/L12 stalk, and near the tRNA binding site of the peptidyltransferase center. The polypeptide is Large ribosomal subunit protein uL6 (Desulfosudis oleivorans (strain DSM 6200 / JCM 39069 / Hxd3) (Desulfococcus oleovorans)).